Reading from the N-terminus, the 61-residue chain is UPF0434 protein PST_2635 (61 aa).

Belongs to the UPF0434 family.

The sequence is that of UPF0434 protein PST_2635 from Stutzerimonas stutzeri (strain A1501) (Pseudomonas stutzeri).